Here is a 381-residue protein sequence, read N- to C-terminus: E3 ubiquitin-protein ligase KCMF1 (381 aa).

Serine 2 carries the N-acetylserine modification. Serine 2 is modified (phosphoserine). The ZZ-type zinc finger occupies 4–60 (HEGVSCDACLKGNFRGRRYKCLICYDYDLCASCYESGATTTRHTTDHPMQCILTRVD). 8 residues coordinate Zn(2+): cysteine 9, cysteine 12, cysteine 24, cysteine 27, cysteine 33, cysteine 36, histidine 46, and histidine 50. Residues 78 to 101 (FTCPYCGKMGYTETSLQEHVTSEH) form a C2H2-type zinc finger. The segment at 154 to 194 (MFHPGRGLGGPRARRSNMHFTSSSTGGLSSSQSSYSPSSRE) is disordered. A phosphoserine mark is found at serine 169, serine 189, and serine 212. Residues 175-192 (SSSTGGLSSSQSSYSPSS) show a composition bias toward low complexity. Residues 224–259 (ASQLQQLQMQLQLERQHAQAARQQLETARNASRRTN) are a coiled coil. Residues serine 335 and serine 336 each carry the phosphoserine modification.

Belongs to the KCMF1 family. As to quaternary structure, component of the SIFI complex, composed of KCMF1, UBR4 and calmodulin (CALM1, CALM2 or CALM3). Testis, liver, kidney, heart and skeletal muscle.

The protein localises to the cytoplasm. Its subcellular location is the late endosome. The protein resides in the lysosome. The catalysed reaction is S-ubiquitinyl-[E2 ubiquitin-conjugating enzyme]-L-cysteine + [acceptor protein]-L-lysine = [E2 ubiquitin-conjugating enzyme]-L-cysteine + N(6)-ubiquitinyl-[acceptor protein]-L-lysine.. Its pathway is protein modification; protein ubiquitination. In terms of biological role, E3 ubiquitin-protein ligase which accepts ubiquitin from an E2 ubiquitin-conjugating enzyme and then transfers it to targeted substrates, promoting their degradation by the proteasome. Together with UBR4, component of the N-end rule pathway: ubiquitinates proteins bearing specific N-terminal residues that are destabilizing according to the N-end rule, leading to their degradation. Does not ubiquitinate proteins that are acetylated at the N-terminus. Together with UBR4, part of a protein quality control pathway that catalyzes ubiquitination and degradation of proteins that have been oxidized in response to reactive oxygen species (ROS): recognizes proteins with an Arg-CysO3(H) degron at the N-terminus, and mediates assembly of heterotypic 'Lys-63'-/'Lys-27'-linked branched ubiquitin chains on oxidized proteins, leading to their degradation by autophagy. Catalytic component of the SIFI complex, a multiprotein complex required to inhibit the mitochondrial stress response after a specific stress event has been resolved: ubiquitinates and degrades (1) components of the HRI-mediated signaling of the integrated stress response, such as DELE1 and EIF2AK1/HRI, as well as (2) unimported mitochondrial precursors. Within the SIFI complex, UBR4 initiates ubiquitin chain that are further elongated or branched by KCMF1. In Mus musculus (Mouse), this protein is E3 ubiquitin-protein ligase KCMF1.